The following is a 365-amino-acid chain: UDP-N-acetylglucosamine--N-acetylmuramyl-(pentapeptide) pyrophosphoryl-undecaprenol N-acetylglucosamine transferase (365 aa).

UDP-N-acetyl-alpha-D-glucosamine-binding positions include 11 to 13 (TGG), Asn124, Arg165, Ser192, Ile246, and Gln291.

This sequence belongs to the glycosyltransferase 28 family. MurG subfamily.

The protein localises to the cell inner membrane. The catalysed reaction is di-trans,octa-cis-undecaprenyl diphospho-N-acetyl-alpha-D-muramoyl-L-alanyl-D-glutamyl-meso-2,6-diaminopimeloyl-D-alanyl-D-alanine + UDP-N-acetyl-alpha-D-glucosamine = di-trans,octa-cis-undecaprenyl diphospho-[N-acetyl-alpha-D-glucosaminyl-(1-&gt;4)]-N-acetyl-alpha-D-muramoyl-L-alanyl-D-glutamyl-meso-2,6-diaminopimeloyl-D-alanyl-D-alanine + UDP + H(+). It participates in cell wall biogenesis; peptidoglycan biosynthesis. In terms of biological role, cell wall formation. Catalyzes the transfer of a GlcNAc subunit on undecaprenyl-pyrophosphoryl-MurNAc-pentapeptide (lipid intermediate I) to form undecaprenyl-pyrophosphoryl-MurNAc-(pentapeptide)GlcNAc (lipid intermediate II). This is UDP-N-acetylglucosamine--N-acetylmuramyl-(pentapeptide) pyrophosphoryl-undecaprenol N-acetylglucosamine transferase from Nitratidesulfovibrio vulgaris (strain ATCC 29579 / DSM 644 / CCUG 34227 / NCIMB 8303 / VKM B-1760 / Hildenborough) (Desulfovibrio vulgaris).